Here is a 357-residue protein sequence, read N- to C-terminus: Dehydrogenase FUB6 (357 aa).

This sequence belongs to the zinc-containing alcohol dehydrogenase family. Quinone oxidoreductase subfamily.

It participates in mycotoxin biosynthesis. Functionally, dehydrogenase; part of the gene cluster that mediates the biosynthesis of fusaric acid, a mycotoxin with low to moderate toxicity to animals and humans, but with high phytotoxic properties. L-aspartate is suggested as fusaric acid amino acid precursor that is activated and further processed to O-acetyl-L-homoserine by cluster enzymes aspartate kinase FUB3 and homoserine O-acetyltransferase FUB5, as well as enzymes of the primary metabolism. The polyketide synthase (PKS) FUB1 generates the triketide trans-2-hexenal which is presumptively released by the hydrolase FUB4 and linked to the NRPS-bound amino acid precursor by NAD(P)-dependent dehydrogenase FUB6. FUB1, FUB4, and the non-canonical NRPS Fub8 may form an enzyme complex. Further processing of the NRPS-bound intermediate might be carried out by FUB6 and the O-acetylhomoserine FUB7, enabling a spontaneous electrocyclization to close the carbon backbone of fusaric acid. Dihydrofusaric acid is likely to be released via reduction by the thioester reductase (TR) domain of FUB8 whereupon the final oxidation to fusaric acid may (also) be performed by the FMN-dependent dehydrogenase FUB9. The sequence is that of Dehydrogenase FUB6 from Gibberella moniliformis (strain M3125 / FGSC 7600) (Maize ear and stalk rot fungus).